The chain runs to 97 residues: Protein RADIALIS-like 6 (97 aa).

The SANT domain maps to 7–59 (SSISPWTFSQNKMFERALAVYDKDTPDRWHNVAKAVGGKTVEEVKRHYDILVE).

As to expression, expressed in the micropylar endosperm surrounding globular-stage embryos but no expression was detected elsewhere, including floral tissues.

Its subcellular location is the nucleus. Probable transcription factor. This is Protein RADIALIS-like 6 (RL6) from Arabidopsis thaliana (Mouse-ear cress).